Reading from the N-terminus, the 349-residue chain is MAIPITVLDCDLLLYGRGHRTLDRFKLDDVTDEYLMSMYGFPRQFIYFLVELLGASLSRPTQRSRAISPETQILAALGFYTSGSFQTRMGDAIGISQASMSRCVANVTEALVERASQFIHFPVDEAAVQSLKDEFYGLAGMPGVIGVADCIHVAIKAPNAEDLSYVNRKGLHSLNCLVVCDIRGALMTVETSWPGSLQDCAVLQRSSLTSQFETGMPKDSWLLGDSSFFLRSWLLTPLPIPETAAEYRYNRAHSATHSVIERTLQTLCCRFRCLDGSKGALQYSPEKCSHIILACCVLHNISLDHGMDVWSSPVPGPIDQPPEGEDEHMESLDLEADRIRQELILTHFS.

A divalent metal cation contacts are provided by D149, D199, D225, and E261. The region spanning 149-300 (DCIHVAIKAP…IILACCVLHN (152 aa)) is the DDE Tnp4 domain.

This sequence belongs to the HARBI1 family. In terms of assembly, interacts with NAIF1. It depends on a divalent metal cation as a cofactor. As to expression, detected in adult brain, eye, nerve tissue and lung. Detected in embryo.

The protein localises to the nucleus. It localises to the cytoplasm. Transposase-derived protein that may have nuclease activity (Potential). Does not have transposase activity. The chain is Putative nuclease HARBI1 (Harbi1) from Mus musculus (Mouse).